A 328-amino-acid chain; its full sequence is DNA-directed RNA polymerase subunit alpha (328 aa).

The interval 1–234 (MQGSVTEFLK…EQLDAFVDLR (234 aa)) is alpha N-terminal domain (alpha-NTD). An alpha C-terminal domain (alpha-CTD) region spans residues 248-328 (FXPILLRPVD…NWPPASIAED (81 aa)).

This sequence belongs to the RNA polymerase alpha chain family. As to quaternary structure, homodimer. The RNAP catalytic core consists of 2 alpha, 1 beta, 1 beta' and 1 omega subunit. When a sigma factor is associated with the core the holoenzyme is formed, which can initiate transcription.

It carries out the reaction RNA(n) + a ribonucleoside 5'-triphosphate = RNA(n+1) + diphosphate. DNA-dependent RNA polymerase catalyzes the transcription of DNA into RNA using the four ribonucleoside triphosphates as substrates. The sequence is that of DNA-directed RNA polymerase subunit alpha from Haemophilus influenzae (strain ATCC 51907 / DSM 11121 / KW20 / Rd).